The primary structure comprises 313 residues: Homoserine O-succinyltransferase (313 aa).

The active-site Acyl-thioester intermediate is the Cys-142. Lys-163 and Ser-192 together coordinate substrate. His-235 serves as the catalytic Proton acceptor. Glu-237 is an active-site residue. Residue Arg-249 participates in substrate binding.

It belongs to the MetA family.

The protein localises to the cytoplasm. The enzyme catalyses L-homoserine + succinyl-CoA = O-succinyl-L-homoserine + CoA. The protein operates within amino-acid biosynthesis; L-methionine biosynthesis via de novo pathway; O-succinyl-L-homoserine from L-homoserine: step 1/1. Its function is as follows. Transfers a succinyl group from succinyl-CoA to L-homoserine, forming succinyl-L-homoserine. The chain is Homoserine O-succinyltransferase from Vibrio vulnificus (strain CMCP6).